The following is a 235-amino-acid chain: Claudin-16 (235 aa).

Over 1 to 3 the chain is Cytoplasmic; the sequence is MRD. A helical membrane pass occupies residues 4–24; that stretch reads LLQYIACFFAFFSAGFLIVAT. Topologically, residues 25–79 are extracellular; sequence WTDCWMVNADDSLEVSTKCRGLWWECVTNAFDGIRTCDEYDSILAEHPLKLVVTR. Residues 80–100 form a helical membrane-spanning segment; sequence ALMITADILAGFGFLTLLLGL. At 101–115 the chain is on the cytoplasmic side; it reads DCVKFLPDEPYIKVR. The chain crosses the membrane as a helical span at residues 116 to 136; it reads ICFVAGATLLIAGTPGIIGSV. The Extracellular portion of the chain corresponds to 137-169; that stretch reads WYAVDVYVERSTLVLHNIFLGIQYKFGWSCWLG. A helical transmembrane segment spans residues 170–190; the sequence is MAGSLGCFLAGAVLTCCLYLF. Over 191–235 the chain is Cytoplasmic; sequence KDVGPERNYPYSLRKAYSAAGVSMAKSYSAPRTETAKMYAVDTRV. The Interaction with TJP1 signature appears at 233–235; it reads TRV.

Belongs to the claudin family. Can form heteropolymeric tight junction strands with other claudins. Interacts with CLDN19. Interacts (via PDZ-binding motif TRV) with TJP1 (via PDZ domain). Cannot form tight junction strands on its own. Kidney-specific, including the thick ascending limb of Henle (TAL).

Its subcellular location is the cell junction. It is found in the tight junction. The protein localises to the cell membrane. The enzyme catalyses Mg(2+)(in) = Mg(2+)(out). It catalyses the reaction Ca(2+)(in) = Ca(2+)(out). The catalysed reaction is Na(+)(in) = Na(+)(out). It carries out the reaction K(+)(in) = K(+)(out). The enzyme catalyses Rb(+)(in) = Rb(+)(out). It catalyses the reaction Cs(+)(in) = Cs(+)(out). The catalysed reaction is Li(+)(in) = Li(+)(out). Its function is as follows. Forms paracellular channels: coassembles with CLDN19 into tight junction strands with cation-selective channels through the strands, conveying epithelial permeability in a process known as paracellular tight junction permeability. Involved in the maintenance of ion gradients along the nephron. In the thick ascending limb (TAL) of Henle's loop, facilitates sodium paracellular permeability from the interstitial compartment to the lumen, contributing to the lumen-positive transepithelial potential that drives paracellular magnesium and calcium reabsorption. The chain is Claudin-16 from Homo sapiens (Human).